A 508-amino-acid chain; its full sequence is MKKVVIDGNNLTIEDVVKVARDKWEVVLSEVAKERIVHSREIVDRYVKEGKVVYGITTGFGKFSDVVISKEDTEALQKNLIMSHSCAVGDPLPEEVVRAIMLLRANALAKGFSGVRLETVETLIEMINKNVVPVIPEKGSLGASGDLAPLAHMVLVMIGRGEAFYAGERVSGEEAMRRAGIPTITLSSKEGLALINGTQVMSALGCLNVYDAKRIIAVADAVASITLEALRGIIDAFDDRVQMVRPHKGQIVSAKNVRKMVEGSELITRQGEIRVQDAYTLRCIPQVHGAVRDAISYIERVLGVEINSATDNPLIFPDDGEVISGGNFHGEPVALAMDFLSIALSEIANISERRIERLVNYQLNDLPPFLTEKGGLNSGMMIAQYTAASLVSENKVLSHPASVDSIPSSANQEDHVSMGTIAARKAREVLKNVTTVLAIELLTASQALEFRKGFKRGKGTDRIYRLVREKVNPLVEDRELYIDINACFDIIRSGRIEEVLKEEGIMLE.

A cross-link (5-imidazolinone (Ala-Gly)) is located at residues 143–145 (ASG). Residue Ser-144 is modified to 2,3-didehydroalanine (Ser).

It belongs to the PAL/histidase family. In terms of processing, contains an active site 4-methylidene-imidazol-5-one (MIO), which is formed autocatalytically by cyclization and dehydration of residues Ala-Ser-Gly.

It localises to the cytoplasm. It carries out the reaction L-histidine = trans-urocanate + NH4(+). It participates in amino-acid degradation; L-histidine degradation into L-glutamate; N-formimidoyl-L-glutamate from L-histidine: step 1/3. This chain is Histidine ammonia-lyase, found in Caldanaerobacter subterraneus subsp. tengcongensis (strain DSM 15242 / JCM 11007 / NBRC 100824 / MB4) (Thermoanaerobacter tengcongensis).